Reading from the N-terminus, the 173-residue chain is Adenine phosphoribosyltransferase (173 aa).

The protein belongs to the purine/pyrimidine phosphoribosyltransferase family. In terms of assembly, homodimer.

The protein resides in the cytoplasm. The catalysed reaction is AMP + diphosphate = 5-phospho-alpha-D-ribose 1-diphosphate + adenine. It participates in purine metabolism; AMP biosynthesis via salvage pathway; AMP from adenine: step 1/1. Functionally, catalyzes a salvage reaction resulting in the formation of AMP, that is energically less costly than de novo synthesis. This is Adenine phosphoribosyltransferase from Listeria monocytogenes serotype 4b (strain CLIP80459).